The chain runs to 181 residues: RNA-binding protein (181 aa).

The tract at residues 106–181 is disordered; the sequence is FLTSVNPGES…DANTRKSKRK (76 aa). Positions 141 to 157 are enriched in basic residues; that stretch reads RNSKKGAKKSSSARKKK. Residues 160-172 show a composition bias toward low complexity; it reads SSNSETDLSSDSD.

This sequence belongs to the phytoreovirus RNA-binding protein family.

It localises to the host cytoplasm. Its function is as follows. Constituent of viral factories. Binds to ssRNA and dsRNA. The chain is RNA-binding protein from Rice dwarf virus (isolate Akita) (RDV).